A 970-amino-acid chain; its full sequence is ATP-dependent DNA helicase DDX11 (970 aa).

Residues 9–445 (GAIHFPFPFT…KNLMYLKQIL (437 aa)) form the Helicase ATP-binding domain. 44–51 (SPTGTGKS) lines the ATP pocket. S262 bears the Phosphoserine mark. [4Fe-4S] cluster is bound by residues C267 and C285. The segment covering 289–304 (QRSRHEKKKGAEEEKP) has biased composition (basic and acidic residues). Residues 289-312 (QRSRHEKKKGAEEEKPKRRRQEKQ) are disordered. Residues C315 and C350 each coordinate [4Fe-4S] cluster. The short motif at 393-396 (DEAH) is the DEAH box element. The disordered stretch occupies residues 818 to 849 (TLSPRPGTPREGSGGEPVHEGRQPVHRQGHQA).

It belongs to the DEAD box helicase family. DEAH subfamily. DDX11/CHL1 sub-subfamily. In terms of assembly, associates with the CTF18-RFC complex. Associates with a cohesin complex composed of RAD21, SMC1 proteins and SMC3. Interacts with CHTF18. Interacts with DSCC1. Interacts with FEN1; this interaction is direct and increases flap endonuclease activity of FEN1. Interacts with PCNA. Interacts with POLR1A and UBTF. Interacts with RAD21, SMC1 proteins and SMC3. Interacts with RFC2. Interacts with TIMELESS; this interaction increases recruitment of both proteins onto chromatin in response to replication stress induction by hydroxyurea. As to quaternary structure, (Microbial infection) Interacts with bovine papillomavirus type 1 regulatory protein E2; this interaction stimulates the recruitment of E2 onto mitotic chromosomes. The cofactor is Mg(2+). [4Fe-4S] cluster is required as a cofactor. In terms of tissue distribution, expressed in melanoma cells. Not detected in epidermal melanocytes of normal skin (at protein level). Highly expressed in spleen, B-cells, thymus, testis, ovary, small intestine and pancreas. Very low expression seen in brain. Expressed in dividing cells and/or cells undergoing high levels of recombination. No expression detected in cells signaled to terminally differentiate. Expressed weakly in keratinocytes.

It localises to the nucleus. The protein resides in the nucleolus. It is found in the cytoplasm. The protein localises to the cytoskeleton. Its subcellular location is the spindle pole. It localises to the midbody. The protein resides in the microtubule organizing center. It is found in the centrosome. The protein localises to the chromosome. It catalyses the reaction Couples ATP hydrolysis with the unwinding of duplex DNA at the replication fork by translocating in the 5'-3' direction. This creates two antiparallel DNA single strands (ssDNA). The leading ssDNA polymer is the template for DNA polymerase III holoenzyme which synthesizes a continuous strand.. It carries out the reaction ATP + H2O = ADP + phosphate + H(+). Its activity is regulated as follows. ATPase activity is stimulated by high magnesium salt levels (up to a 0.1 M), and potassium salts (glutamate, chloride or acetate) are more effective than the corresponding sodium salts. ATPase activity is enhanced by the long non-coding RNA (lncRNA) cohesion regulator noncoding RNA (CONCR). Double-stranded DNA helicase activity is maximal with magnesium ions at low concentrations (0.5-1 mM) whereas is markedly inhibited at higher levels (5 mM and above). Double-stranded DNA helicase activity is stimulated by 25-50 mM potassium acetate, stimulated to a lesser extent by 25 mM of ammonium acetate, and markedly inhibited by sodium acetate. Functionally, DNA-dependent ATPase and ATP-dependent DNA helicase that participates in various functions in genomic stability, including DNA replication, DNA repair and heterochromatin organization as well as in ribosomal RNA synthesis. Its double-stranded DNA helicase activity requires either a minimal 5'-single-stranded tail length of approximately 15 nt (flap substrates) or 10 nt length single-stranded gapped DNA substrates of a partial duplex DNA structure for helicase loading and translocation along DNA in a 5' to 3' direction. The helicase activity is capable of displacing duplex regions up to 100 bp, which can be extended up to 500 bp by the replication protein A (RPA) or the cohesion CTF18-replication factor C (Ctf18-RFC) complex activities. Also shows ATPase- and helicase activities on substrates that mimic key DNA intermediates of replication, repair and homologous recombination reactions, including forked duplex, anti-parallel G-quadruplex and three-stranded D-loop DNA molecules. Plays a role in DNA double-strand break (DSB) repair at the DNA replication fork during DNA replication recovery from DNA damage. Recruited with TIMELESS factor upon DNA-replication stress response at DNA replication fork to preserve replication fork progression, and hence ensure DNA replication fidelity. Also cooperates with TIMELESS factor during DNA replication to regulate proper sister chromatid cohesion and mitotic chromosome segregation. Stimulates 5'-single-stranded DNA flap endonuclease activity of FEN1 in an ATP- and helicase-independent manner; and hence it may contribute in Okazaki fragment processing at DNA replication fork during lagging strand DNA synthesis. Its ability to function at DNA replication fork is modulated by its binding to long non-coding RNA (lncRNA) cohesion regulator non-coding RNA DDX11-AS1/CONCR, which is able to increase both DDX11 ATPase activity and binding to DNA replicating regions. Also plays a role in heterochromatin organization. Involved in rRNA transcription activation through binding to active hypomethylated rDNA gene loci by recruiting UBTF and the RNA polymerase Pol I transcriptional machinery. Plays a role in embryonic development and prevention of aneuploidy. Involved in melanoma cell proliferation and survival. Associates with chromatin at DNA replication fork regions. Binds to single- and double-stranded DNAs. In terms of biological role, (Microbial infection) Required for bovine papillomavirus type 1 regulatory protein E2 loading onto mitotic chromosomes during DNA replication for the viral genome to be maintained and segregated. The protein is ATP-dependent DNA helicase DDX11 of Homo sapiens (Human).